A 218-amino-acid chain; its full sequence is MTQDEMKKAAGWAALEYVEVGSIVGVGTGSTVNHFIDALATMKDDIKGAVSSSVASTEKLKELGIEVFDCNDVAGLDVYVDGADEINGLNEMIKGGGAALTREKIVAAISDKFICIVDNTKQVDILGEFPLPVEVIPMARSYVARELVKLGGDPAYREGVVTDNGNMILDVHNMKITNAKELEDKINALPGVVTVGLFAHRGADVLLVGAPDGVKKFV.

Substrate contacts are provided by residues Thr28–Thr31, Asp81–Asp84, and Lys94–Gly97. The active-site Proton acceptor is Glu103. Lys121 is a substrate binding site.

It belongs to the ribose 5-phosphate isomerase family. As to quaternary structure, homodimer.

The catalysed reaction is aldehydo-D-ribose 5-phosphate = D-ribulose 5-phosphate. It participates in carbohydrate degradation; pentose phosphate pathway; D-ribose 5-phosphate from D-ribulose 5-phosphate (non-oxidative stage): step 1/1. In terms of biological role, catalyzes the reversible conversion of ribose-5-phosphate to ribulose 5-phosphate. The protein is Ribose-5-phosphate isomerase A of Aliivibrio salmonicida (strain LFI1238) (Vibrio salmonicida (strain LFI1238)).